Consider the following 2969-residue polypeptide: Histone-lysine N-methyltransferase ASH1L (2969 aa).

Disordered stretches follow at residues M1–Q70 and H118–S143. Residues K21–L31 are compositionally biased toward polar residues. At S22 the chain carries Phosphoserine. 2 stretches are compositionally biased toward basic and acidic residues: residues S33–G65 and K127–S143. Residue K34 forms a Glycyl lysine isopeptide (Lys-Gly) (interchain with G-Cter in SUMO2) linkage. At K375 the chain carries N6-acetyllysine. K425 participates in a covalent cross-link: Glycyl lysine isopeptide (Lys-Gly) (interchain with G-Cter in SUMO2). Residues I501–K511 show a composition bias toward polar residues. Disordered stretches follow at residues I501–V525, A537–L583, Y824–R845, K878–P966, S1100–V1128, M1151–S1231, and S1243–N1281. Over residues G512–Q522 the composition is skewed to basic and acidic residues. The segment covering N554 to A579 has biased composition (polar residues). Over residues P887–M897 the composition is skewed to basic residues. Residues P887–S899 constitute a DNA-binding region (a.T hook 1). The span at S920–S932 shows a compositional bias: basic and acidic residues. The segment covering F936–D949 has biased composition (acidic residues). Composition is skewed to low complexity over residues S1100–S1123 and S1162–S1175. Phosphoserine is present on residues S1162 and S1170. Residues S1186–S1211 show a composition bias toward polar residues. At Q1220 the chain carries N5-methylglutamine. Composition is skewed to basic residues over residues E1246–N1256 and K1266–P1277. Residues K1347 to A1359 constitute a DNA-binding region (a.T hook 2). Disordered regions lie at residues H1489–R1508, S1580–D1711, and A1741–K1761. Composition is skewed to polar residues over residues E1496–R1508, S1580–A1598, N1605–S1622, and L1650–C1680. Residues A1741–R1751 are compositionally biased toward low complexity. The a.T hook 3 DNA-binding region spans K1847 to Q1859. Positions K1911–K1991 are disordered. A catalytic domain region spans residues P2069–S2288. The AWS domain occupies Y2091 to E2142. The SET domain occupies Q2145–N2261. The region spanning K2269–G2285 is the Post-SET domain. A disordered region spans residues S2288–Q2346. Over residues Q2289 to M2303 the composition is skewed to polar residues. Basic residues predominate over residues T2305–G2327. K2317, K2319, and K2323 each carry N6-acetyllysine. Residues E2335 to Q2346 show a composition bias toward polar residues. The 107-residue stretch at R2444–A2550 folds into the Bromo domain. Residues V2585–R2631 form a PHD-type zinc finger. A BAH domain is found at L2661–H2798. 2 disordered regions span residues S2825–Q2856 and N2876–N2919. Positions W2842–G2855 are enriched in basic and acidic residues.

It belongs to the class V-like SAM-binding methyltransferase superfamily. Histone-lysine methyltransferase family. SET2 subfamily. Post-translationally, methylated at Gln-1220 by N6AMT1. Widely expressed, with highest level in brain, heart and kidney.

Its subcellular location is the nucleus. The protein resides in the cell junction. It localises to the tight junction. The protein localises to the chromosome. The catalysed reaction is L-lysyl(36)-[histone H3] + 3 S-adenosyl-L-methionine = N(6),N(6),N(6)-trimethyl-L-lysyl(36)-[histone H3] + 3 S-adenosyl-L-homocysteine + 3 H(+). The enzyme catalyses L-lysyl(9)-[histone H3] + S-adenosyl-L-methionine = N(6)-methyl-L-lysyl(9)-[histone H3] + S-adenosyl-L-homocysteine + H(+). Functionally, histone methyltransferase specifically trimethylating 'Lys-36' of histone H3 forming H3K36me3. Also monomethylates 'Lys-9' of histone H3 (H3K9me1) in vitro. The physiological significance of the H3K9me1 activity is unclear. The sequence is that of Histone-lysine N-methyltransferase ASH1L (ASH1L) from Homo sapiens (Human).